The chain runs to 310 residues: Acetylglutamate kinase (310 aa).

Residues 74–75 (GG), R96, and N201 contribute to the substrate site.

This sequence belongs to the acetylglutamate kinase family. ArgB subfamily.

It localises to the cytoplasm. It catalyses the reaction N-acetyl-L-glutamate + ATP = N-acetyl-L-glutamyl 5-phosphate + ADP. The protein operates within amino-acid biosynthesis; L-arginine biosynthesis; N(2)-acetyl-L-ornithine from L-glutamate: step 2/4. In terms of biological role, catalyzes the ATP-dependent phosphorylation of N-acetyl-L-glutamate. The protein is Acetylglutamate kinase of Arthrobacter sp. (strain FB24).